A 102-amino-acid chain; its full sequence is Thioredoxin (102 aa).

A Thioredoxin domain is found at 1-102 (MVKIISSENF…FLTNLINKHA (102 aa)). Cys28 and Cys31 are joined by a disulfide.

It belongs to the thioredoxin family.

Its function is as follows. Participates in various redox reactions through the reversible oxidation of its active center dithiol to a disulfide and catalyzes dithiol-disulfide exchange reactions. The protein is Thioredoxin (trxA) of Chlamydia pneumoniae (Chlamydophila pneumoniae).